Consider the following 292-residue polypeptide: Hydroxysqualene synthase (292 aa).

This sequence belongs to the phytoene/squalene synthase family. HpnC subfamily.

It catalyses the reaction presqualene diphosphate + H2O = hydroxysqualene + diphosphate. It participates in secondary metabolite biosynthesis; hopanoid biosynthesis. In terms of biological role, involved in the biosynthesis of the hopanoid precursor squalene (SQ) from farnesyl diphosphate (FPP). Catalyzes the second step, the conversion of presqualene diphosphate (PSPP) to hydroxysqualene (HSQ). This chain is Hydroxysqualene synthase, found in Rhodopseudomonas palustris (strain ATCC BAA-98 / CGA009).